We begin with the raw amino-acid sequence, 62 residues long: Sperm protamine P1 (62 aa).

Residues 1–46 are disordered; sequence MARCRRHSRSRSRSRNQCQRRRRRHYNRRRTYRRSRRHSRRRRVRR.

It belongs to the protamine P1 family. In terms of tissue distribution, testis.

The protein resides in the nucleus. Its subcellular location is the chromosome. Protamines substitute for histones in the chromatin of sperm during the haploid phase of spermatogenesis. They compact sperm DNA into a highly condensed, stable and inactive complex. This Planigale gilesi (Flat-skulled marsupial mouse) protein is Sperm protamine P1 (PRM1).